The chain runs to 481 residues: Aspartyl/glutamyl-tRNA(Asn/Gln) amidotransferase subunit B (481 aa).

This sequence belongs to the GatB/GatE family. GatB subfamily. In terms of assembly, heterotrimer of A, B and C subunits.

It carries out the reaction L-glutamyl-tRNA(Gln) + L-glutamine + ATP + H2O = L-glutaminyl-tRNA(Gln) + L-glutamate + ADP + phosphate + H(+). It catalyses the reaction L-aspartyl-tRNA(Asn) + L-glutamine + ATP + H2O = L-asparaginyl-tRNA(Asn) + L-glutamate + ADP + phosphate + 2 H(+). In terms of biological role, allows the formation of correctly charged Asn-tRNA(Asn) or Gln-tRNA(Gln) through the transamidation of misacylated Asp-tRNA(Asn) or Glu-tRNA(Gln) in organisms which lack either or both of asparaginyl-tRNA or glutaminyl-tRNA synthetases. The reaction takes place in the presence of glutamine and ATP through an activated phospho-Asp-tRNA(Asn) or phospho-Glu-tRNA(Gln). The protein is Aspartyl/glutamyl-tRNA(Asn/Gln) amidotransferase subunit B of Pseudomonas putida (strain W619).